A 334-amino-acid chain; its full sequence is Trans-1,2-dihydrobenzene-1,2-diol dehydrogenase (334 aa).

It belongs to the Gfo/Idh/MocA family. As to quaternary structure, homodimer. As to expression, small intestine.

The catalysed reaction is (1R,2R)-1,2-dihydrobenzene-1,2-diol + NADP(+) = catechol + NADPH + H(+). The enzyme catalyses D-xylose + NADP(+) = D-xylono-1,5-lactone + NADPH + H(+). The polypeptide is Trans-1,2-dihydrobenzene-1,2-diol dehydrogenase (DHDH) (Homo sapiens (Human)).